The primary structure comprises 160 residues: Ribosome maturation factor RimP (160 aa).

It belongs to the RimP family.

Its subcellular location is the cytoplasm. Required for maturation of 30S ribosomal subunits. The sequence is that of Ribosome maturation factor RimP from Geobacter sp. (strain M21).